The following is a 151-amino-acid chain: Small ribosomal subunit protein uS15 (151 aa).

Belongs to the universal ribosomal protein uS15 family.

This chain is Small ribosomal subunit protein uS15 (RpS13), found in Anopheles gambiae (African malaria mosquito).